Consider the following 386-residue polypeptide: ADP,ATP carrier protein 1, mitochondrial (386 aa).

The N-terminal 76 residues, 1–76 (MDQVQHPSVM…PSTASAICVQ (76 aa)), are a transit peptide targeting the mitochondrion. 3 Solcar repeats span residues 84-177 (SSFA…FKRL), 189-281 (KWFA…LKPV), and 289-375 (DSFF…LQLI). 5 helical membrane-spanning segments follow: residues 86–113 (FAID…VKLL), 154–178 (TANV…KRLF), 187–207 (YWKW…SSLL), 257–278 (FNIS…YDSL), and 292–312 (FASF…SYPI). Residues R159 and K171 each coordinate ADP. An ADP-binding site is contributed by R316. An important for transport activity region spans residues 316-321 (RRRMMM). Residues 316-321 (RRRMMM) carry the Nucleotide carrier signature motif motif. The helical transmembrane segment at 352-372 (AGSNILRAIAGAGVLAGYDKL) threads the bilayer.

It belongs to the mitochondrial carrier (TC 2.A.29) family. Monomer.

The protein localises to the mitochondrion inner membrane. The catalysed reaction is ADP(in) + ATP(out) = ADP(out) + ATP(in). Its activity is regulated as follows. The matrix-open state (m-state) is inhibited by the membrane-permeable bongkrekic acid (BKA). The cytoplasmic-open state (c-state) is inhibited by the membrane-impermeable toxic inhibitor carboxyatractyloside (CATR). ADP:ATP antiporter that mediates import of ADP into the mitochondrial matrix for ATP synthesis, and export of ATP out to fuel the cell. Cycles between the cytoplasmic-open state (c-state) and the matrix-open state (m-state): operates by the alternating access mechanism with a single substrate-binding site intermittently exposed to either the cytosolic (c-state) or matrix (m-state) side of the inner mitochondrial membrane. The polypeptide is ADP,ATP carrier protein 1, mitochondrial (ANT1) (Gossypium hirsutum (Upland cotton)).